Consider the following 283-residue polypeptide: Pantothenate synthetase (283 aa).

26-33 (MGNLHEGH) is an ATP binding site. Residue His-33 is the Proton donor of the active site. Residue Gln-57 coordinates (R)-pantoate. Position 57 (Gln-57) interacts with beta-alanine. 148–151 (GKKD) is a binding site for ATP. Residue Gln-154 coordinates (R)-pantoate. ATP is bound at residue 185–188 (LSSR).

The protein belongs to the pantothenate synthetase family. Homodimer.

The protein localises to the cytoplasm. It catalyses the reaction (R)-pantoate + beta-alanine + ATP = (R)-pantothenate + AMP + diphosphate + H(+). It functions in the pathway cofactor biosynthesis; (R)-pantothenate biosynthesis; (R)-pantothenate from (R)-pantoate and beta-alanine: step 1/1. Functionally, catalyzes the condensation of pantoate with beta-alanine in an ATP-dependent reaction via a pantoyl-adenylate intermediate. The chain is Pantothenate synthetase from Polaromonas naphthalenivorans (strain CJ2).